Here is a 492-residue protein sequence, read N- to C-terminus: Ketol-acid reductoisomerase (NADP(+)) (492 aa).

The KARI N-terminal Rossmann domain maps to 15-208; it reads AQLGKCRFMA…GGHRAGVLES (194 aa). Residues 45–48, arginine 68, arginine 76, serine 78, and 108–110 contribute to the NADP(+) site; these read CGAQ and DKQ. Histidine 132 is an active-site residue. NADP(+) is bound at residue glycine 158. KARI C-terminal knotted domains lie at 209–344 and 345–485; these read SFVA…NAPQ and FEGK…MTDM. Mg(2+) is bound by residues aspartate 217, glutamate 221, glutamate 389, and glutamate 393. Serine 414 provides a ligand contact to substrate.

This sequence belongs to the ketol-acid reductoisomerase family. Mg(2+) serves as cofactor.

It catalyses the reaction (2R)-2,3-dihydroxy-3-methylbutanoate + NADP(+) = (2S)-2-acetolactate + NADPH + H(+). The catalysed reaction is (2R,3R)-2,3-dihydroxy-3-methylpentanoate + NADP(+) = (S)-2-ethyl-2-hydroxy-3-oxobutanoate + NADPH + H(+). Its pathway is amino-acid biosynthesis; L-isoleucine biosynthesis; L-isoleucine from 2-oxobutanoate: step 2/4. The protein operates within amino-acid biosynthesis; L-valine biosynthesis; L-valine from pyruvate: step 2/4. Its function is as follows. Involved in the biosynthesis of branched-chain amino acids (BCAA). Catalyzes an alkyl-migration followed by a ketol-acid reduction of (S)-2-acetolactate (S2AL) to yield (R)-2,3-dihydroxy-isovalerate. In the isomerase reaction, S2AL is rearranged via a Mg-dependent methyl migration to produce 3-hydroxy-3-methyl-2-ketobutyrate (HMKB). In the reductase reaction, this 2-ketoacid undergoes a metal-dependent reduction by NADPH to yield (R)-2,3-dihydroxy-isovalerate. In Yersinia pseudotuberculosis serotype O:3 (strain YPIII), this protein is Ketol-acid reductoisomerase (NADP(+)).